A 118-amino-acid chain; its full sequence is Large ribosomal subunit protein bL19 (118 aa).

Belongs to the bacterial ribosomal protein bL19 family.

In terms of biological role, this protein is located at the 30S-50S ribosomal subunit interface and may play a role in the structure and function of the aminoacyl-tRNA binding site. The protein is Large ribosomal subunit protein bL19 of Campylobacter concisus (strain 13826).